Here is a 537-residue protein sequence, read N- to C-terminus: Lysosomal cobalamin transport escort protein LMBD1 (537 aa).

Residues Met1 to Glu7 are Extracellular-facing. The chain crosses the membrane as a helical span at residues Leu8–Val28. Residues Tyr29 to Ala47 lie on the Cytoplasmic side of the membrane. Residues Ile48–Val68 traverse the membrane as a helical segment. Residues Ser69–Gly98 lie on the Extracellular side of the membrane. Residues Asn75 and Asn85 are each glycosylated (N-linked (GlcNAc...) asparagine). The helical transmembrane segment at Tyr99–Phe119 threads the bilayer. At Tyr120–Thr142 the chain is on the cytoplasmic side. Residues Ser143–Ile163 form a helical membrane-spanning segment. The Extracellular portion of the chain corresponds to Pro164–Asn186. Residue Asn168 is glycosylated (N-linked (GlcNAc...) asparagine). Residues Gly187–Ile207 form a helical membrane-spanning segment. Topologically, residues Thr208–Lys303 are cytoplasmic. A helical transmembrane segment spans residues Ile304–Ser324. Over Asn325–Pro362 the chain is Extracellular. A glycan (N-linked (GlcNAc...) asparagine) is linked at Asn345. Residues Leu363–Ile383 traverse the membrane as a helical segment. Over Arg384 to Gln406 the chain is Cytoplasmic. A helical membrane pass occupies residues Ala407–Tyr427. At Ser428–Lys484 the chain is on the extracellular side. 3 N-linked (GlcNAc...) asparagine glycosylation sites follow: Asn445, Asn446, and Asn455. The helical transmembrane segment at Phe485 to Ile505 threads the bilayer. Over Gly506–Pro537 the chain is Cytoplasmic.

The protein belongs to the LIMR family. LMBRD1 subfamily.

The protein localises to the endoplasmic reticulum membrane. It is found in the lysosome membrane. Its subcellular location is the cell membrane. Lysosomal membrane chaperone required to export cobalamin (vitamin B12) from the lysosome to the cytosol, allowing its conversion to cofactors. Targets ABCD4 transporter from the endoplasmic reticulum to the lysosome. Then forms a complex with lysosomal ABCD4 and cytoplasmic MMACHC to transport cobalamin across the lysosomal membrane. May play a role in mediating and regulating the internalization of the insulin receptor. The chain is Lysosomal cobalamin transport escort protein LMBD1 (lmbrd1) from Xenopus laevis (African clawed frog).